The primary structure comprises 532 residues: uncharacterized protein (532 aa).

Helical transmembrane passes span 25–45, 65–85, 109–129, 134–154, 179–199, 203–223, 248–268, 302–322, 344–364, 371–391, 392–412, 425–445, 459–479, and 494–514; these read ITKILSAVYRVPFQNIVGDVG, SGFPVIISKLMNDYSEKNHHT, AVPIALFMGDSHLAVLIQVAA, LFPFVALLRGGFQGRHEMLPS, KGASLYTAGAAAASGSLAGSL, IILGFFWFKTKRDNQTDRQNE, LLLFIQLVDALNLYALLSGGE, VPYISMAVKNKELKIMKEKIT, KPVNIMLFQNGEGTGALQVFS, SLAVTAAAVLQGAGYTVFPAI, AVGAGVAVKWVLNTLLVPRYG, AAVAGLNLYQLRQKEWLDKLR, SAVLLAYTRLWTFLFPATGRG, and AVFIYCMMRLGIFTDEELNSV.

It belongs to the polysaccharide synthase family.

The protein localises to the cell membrane. This is an uncharacterized protein from Bacillus subtilis (strain 168).